Reading from the N-terminus, the 246-residue chain is Flavin-dependent thymidylate synthase (246 aa).

Residues 17–241 form the ThyX domain; that stretch reads VTVELVKHSA…PLTYAAFNTN (225 aa). Residues S69, 92–94, and E101 each bind FAD; that span reads RHR. DUMP contacts are provided by residues 89–92, 101–105, and R173; these read EFMR and EESGR. Residues 92–103 carry the ThyX motif motif; the sequence is RHRVGWSYNEES. FAD is bound by residues 189 to 191 and H195; that span reads NAR. Residue R200 participates in dUMP binding. Residue R200 is the Involved in ionization of N3 of dUMP, leading to its activation of the active site.

This sequence belongs to the thymidylate synthase ThyX family. As to quaternary structure, homotetramer. Requires FAD as cofactor.

The enzyme catalyses dUMP + (6R)-5,10-methylene-5,6,7,8-tetrahydrofolate + NADPH + H(+) = dTMP + (6S)-5,6,7,8-tetrahydrofolate + NADP(+). It participates in pyrimidine metabolism; dTTP biosynthesis. Catalyzes the reductive methylation of 2'-deoxyuridine-5'-monophosphate (dUMP) to 2'-deoxythymidine-5'-monophosphate (dTMP) while utilizing 5,10-methylenetetrahydrofolate (mTHF) as the methyl donor, and NADPH and FADH(2) as the reductant. This chain is Flavin-dependent thymidylate synthase, found in Streptomyces avermitilis (strain ATCC 31267 / DSM 46492 / JCM 5070 / NBRC 14893 / NCIMB 12804 / NRRL 8165 / MA-4680).